A 222-amino-acid polypeptide reads, in one-letter code: Putative N-acetylmannosamine-6-phosphate 2-epimerase (222 aa).

Belongs to the NanE family.

The catalysed reaction is an N-acyl-D-glucosamine 6-phosphate = an N-acyl-D-mannosamine 6-phosphate. It participates in amino-sugar metabolism; N-acetylneuraminate degradation; D-fructose 6-phosphate from N-acetylneuraminate: step 3/5. Its function is as follows. Converts N-acetylmannosamine-6-phosphate (ManNAc-6-P) to N-acetylglucosamine-6-phosphate (GlcNAc-6-P). This Oceanobacillus iheyensis (strain DSM 14371 / CIP 107618 / JCM 11309 / KCTC 3954 / HTE831) protein is Putative N-acetylmannosamine-6-phosphate 2-epimerase.